The following is a 326-amino-acid chain: Protein TMED8 (326 aa).

The disordered stretch occupies residues 1-80 (MSDLQAAEGP…VSPGSKDATE (80 aa)). The GOLD domain occupies 160–324 (PPCIWTFAKV…NKTLYFHIYY (165 aa)). K170 bears the N6-acetyllysine mark. The interval 238 to 268 (DSCDDEDEEEEEEEEIEEPVPAGDVERGSRS) is disordered. Acidic residues predominate over residues 239–255 (SCDDEDEEEEEEEEIEE).

The sequence is that of Protein TMED8 (TMED8) from Pongo abelii (Sumatran orangutan).